The chain runs to 436 residues: Nucleolar protein 4-like (436 aa).

The tract at residues 1 to 184 is disordered; it reads MSDSTWMSAD…KMNDSEGMDP (184 aa). Residues 41–61 are compositionally biased toward low complexity; it reads SESGSGNGSSTLNPSTSSSTQ. S130 carries the post-translational modification Phosphoserine. The span at 160 to 169 shows a compositional bias: acidic residues; the sequence is ADDDDDDHDD. Basic and acidic residues predominate over residues 170–184; sequence HEDNDKMNDSEGMDP. S295 bears the Phosphoserine mark. The segment covering 351–366 has biased composition (polar residues); the sequence is QPPASLQTGNHSNGPT. The tract at residues 351 to 400 is disordered; the sequence is QPPASLQTGNHSNGPTDLSMKGGASTTSTTPTPTPSSTSTSRPVPTAQLS. The span at 375 to 396 shows a compositional bias: low complexity; sequence STTSTTPTPTPSSTSTSRPVPT.

This Homo sapiens (Human) protein is Nucleolar protein 4-like (NOL4L).